The primary structure comprises 602 residues: Elongation factor 4 (602 aa).

The region spanning 8 to 190 (DLIRNFSIVA…AIVHRLPPPK (183 aa)) is the tr-type G domain. GTP contacts are provided by residues 20-25 (DHGKST) and 137-140 (NKID).

It belongs to the TRAFAC class translation factor GTPase superfamily. Classic translation factor GTPase family. LepA subfamily.

It is found in the cell inner membrane. The catalysed reaction is GTP + H2O = GDP + phosphate + H(+). Functionally, required for accurate and efficient protein synthesis under certain stress conditions. May act as a fidelity factor of the translation reaction, by catalyzing a one-codon backward translocation of tRNAs on improperly translocated ribosomes. Back-translocation proceeds from a post-translocation (POST) complex to a pre-translocation (PRE) complex, thus giving elongation factor G a second chance to translocate the tRNAs correctly. Binds to ribosomes in a GTP-dependent manner. This Cereibacter sphaeroides (strain ATCC 17023 / DSM 158 / JCM 6121 / CCUG 31486 / LMG 2827 / NBRC 12203 / NCIMB 8253 / ATH 2.4.1.) (Rhodobacter sphaeroides) protein is Elongation factor 4.